The primary structure comprises 4074 residues: Fibrocystin (4074 aa).

Positions 1 to 22 are cleaved as a signal peptide; that stretch reads MIVWLISLMSIEILLLAGPALS. 2 N-linked (GlcNAc...) asparagine glycosylation sites follow: N54 and N224. Residues 258-310 enclose the IPT/TIG 1 domain; sequence EILSVFPETGSLGGKTDIIITGDFFDNPALVTIAGVPCDIRHMSPRKIECTTR. Residues 323-483 form the PA14 domain; the sequence is AGNRGLLFEV…TWLNPDVVST (161 aa). N355, N385, N518, N527, N640, N710, N741, N822, N829, N868, N953, N966, N976, N1006, N1059, N1083, N1115, N1134, N1233, N1240, N1274, N1284, N1308, N1319, N1342, N1373, N1445, N1456, N1471, N1490, N1528, N1560, N1578, N1598, N1627, N1694, N1760, N1775, N1789, N1875, N1915, N1941, N1955, N2030, N2111, and N2140 each carry an N-linked (GlcNAc...) asparagine glycan. Residues 944–1000 enclose the IPT/TIG 2 domain; the sequence is SLLIYIFGINFSGDPQALEIMVNKTNCKVIFSNQTNVICQTDLLPVGMHRLFMVVRP. IPT/TIG domains lie at 1018 to 1101, 1107 to 1186, and 1199 to 1274; these read PRLD…AFTY, PVIT…RSPG, and SIEP…WAGN. Residues 1385–1464 enclose the IPT/TIG 6 domain; it reads PWIMAISPTH…LNVTVIVNGL (80 aa). The IPT/TIG 7 domain occupies 1573-1641; the sequence is HYFPKNFSIH…LVIEVDGLSY (69 aa). The region spanning 1928–2049 is the G8 1 domain; it reads HSWFPERVPQ…PEVTFTHLQA (122 aa). PbH1 repeat units follow at residues 2245-2267, 2288-2322, 2351-2373, 2383-2404, and 2405-2427; these read TLGL…LVGT, EQGN…YILN, APLL…FIYP, RGPT…RISR, and SSNL…DILE. The N-linked (GlcNAc...) asparagine glycan is linked to N2390. 10 N-linked (GlcNAc...) asparagine glycosylation sites follow: N2431, N2467, N2531, N2549, N2579, N2591, N2749, N2764, N2972, and N3004. A PbH1 6 repeat occupies 2460-2483; it reads RWELIISNTTFVNFDLTDCVSIRT. The G8 2 domain maps to 2743-2869; it reads EGWGGHNHTI…PKKSWTRLAA (127 aa). One copy of the PbH1 7 repeat lies at 3029 to 3051; the sequence is SHGIILNDNIVFGTVGHGIDLEG. The N-linked (GlcNAc...) asparagine glycan is linked to N3053. A PbH1 8 repeat occupies 3082-3104; that stretch reads AKDINLYGNVVAGSERIGFHIQG. N-linked (GlcNAc...) asparagine glycosylation is found at N3136, N3165, N3221, N3484, N3702, N3721, and N3833. The stretch at 3158–3183 is one PbH1 9 repeat; it reads ENSVEIENITLVDNSIGLLATVYVSS. Residues 3854–3874 form a helical membrane-spanning segment; it reads IILAVSLCSVASWLALCCLVC. The segment at 3871–3888 is ciliary targeting sequence (CST); the sequence is CLVCCWFRKSKSRKIKSE. 3 disordered regions span residues 3896-3919, 3943-3965, and 4031-4074; these read NDQK…KEDT, NGVS…REED, and LQGQ…QEQL. Composition is skewed to basic and acidic residues over residues 3910–3919 and 3954–3965; these read RSQETKKEDT and AVREEGSSREED. A nuclear localization signal (NLS) region spans residues 3947–3976; the sequence is RRKVSRRAVREEGSSREEDVVPAPRIISIT.

Interacts with CAMLG. Interacts with PKD2. Interacts (via CST) with ARF4; this interaction allows an efficient PKHD1 trafficking to the cilium. Interacts (via CST) with RAB8A; this interaction controls trafficking through the endomembrane systeme and to the cilium. Interacts (via CST) with TULP3; this interaction allows PKHD1 trafficking to the cilium. Palmitoylated. Palmitoylation facilitates the trafficking to the cilia and membrane targeting. Post-translationally, N-glycosylated. In terms of processing, several proteolytic cleavages occur within the extracellular domain, whereas at least one cleavage occurs within the cytoplasmic domain. Cleaved by a probable proprotein convertase which produces an extracellular domain (polyductin extracellular domain, (PECD)) and a C-terminal fragment (polyductin transmembrane fragment (PTM)) which are tethered together by disulfide bonds. This extracellular domain (PECD) is then shed from the primary cilium by activation of a member of the ADAM metalloproteinase disintegrins family, resulting in concomitant release of an intra-cellular C-terminal fragment (ICD) via a gamma-secretase-dependent process. The proteolytic cleavage of the C-terminal intracellular fragment (ICD) is controlled by cytosolic calcium concentration and activation of PKC.

Its subcellular location is the cell membrane. It is found in the cytoplasm. The protein localises to the apical cell membrane. It localises to the cytoskeleton. The protein resides in the cilium basal body. Its subcellular location is the cell projection. It is found in the cilium. The protein localises to the spindle. It localises to the chromosome. The protein resides in the centromere. Its subcellular location is the nucleus. It is found in the secreted. The protein localises to the extracellular exosome. It localises to the endoplasmic reticulum. The protein resides in the golgi apparatus. Promotes ciliogenesis in renal epithelial cells and therefore participates in the tubules formation and/ or ensures the maintenance of the architecture of the lumen of the kidney. Has an impact on cellular symmetry by ensuring correct bipolar cell division through the regulation of centrosome duplication and mitotic spindle assembly and by maintaining oriented cell division (OCD) during tubular elongation through planar cell polarity (PCP) pathway. During epithelial cell morphogenesis, it also regulates cell-cell and cell-matrix adhesion and participates in cell motility. Promotes cell-cell contact through the positive regulation of PTK2 kinase activity leading to either positive regulation of epithelial cell proliferation through the HRAS/RAF1 pathways, or negative regulation of apoptosis through the PDK1/AKT1 pathway. May act in collecting-duct and biliary differentiation. May participate in the regulation of the cholangiocytes proliferation and the CCN2 production in an CXCL8-dependent manner. The sequence is that of Fibrocystin from Canis lupus familiaris (Dog).